The following is a 485-amino-acid chain: Glutamate--tRNA ligase (485 aa).

A 'HIGH' region motif is present at residues 11–21 (PSPTGYMHVGN). Cys-108, Cys-110, Cys-135, and Asp-137 together coordinate Zn(2+). The short motif at 252–256 (KLSKR) is the 'KMSKS' region element. Lys-255 contacts ATP.

It belongs to the class-I aminoacyl-tRNA synthetase family. Glutamate--tRNA ligase type 1 subfamily. In terms of assembly, monomer. Zn(2+) serves as cofactor.

It is found in the cytoplasm. The enzyme catalyses tRNA(Glu) + L-glutamate + ATP = L-glutamyl-tRNA(Glu) + AMP + diphosphate. Its function is as follows. Catalyzes the attachment of glutamate to tRNA(Glu) in a two-step reaction: glutamate is first activated by ATP to form Glu-AMP and then transferred to the acceptor end of tRNA(Glu). This chain is Glutamate--tRNA ligase, found in Clostridium botulinum (strain Okra / Type B1).